The sequence spans 326 residues: Dipeptide transport ATP-binding protein DppD (326 aa).

Positions isoleucine 5–isoleucine 255 constitute an ABC transporter domain. ATP-binding positions include alanine 44 to threonine 49, asparagine 61, and glutamine 97. 4 residues coordinate [4Fe-4S] cluster: cysteine 285, cysteine 291, cysteine 298, and cysteine 316.

It belongs to the ABC transporter superfamily.

Its subcellular location is the cell membrane. The catalysed reaction is a dipeptide(out) + ATP + H2O = a dipeptide(in) + ADP + phosphate + H(+). Its activity is regulated as follows. The C-terminal iron-sulfur cluster may stabilize the structure of the C-terminal loops and may function in the regulation of the transport process. In terms of biological role, part of the ABC transporter Dpp involved in dipeptide transport. Responsible for energy coupling to the transport system. This Caldanaerobacter subterraneus subsp. tengcongensis (strain DSM 15242 / JCM 11007 / NBRC 100824 / MB4) (Thermoanaerobacter tengcongensis) protein is Dipeptide transport ATP-binding protein DppD.